A 179-amino-acid chain; its full sequence is Pyridoxal 5'-phosphate synthase subunit PdxT (179 aa).

48–50 serves as a coordination point for L-glutamine; that stretch reads GES. Cysteine 79 acts as the Nucleophile in catalysis. Residues arginine 101 and 127 to 128 each bind L-glutamine; that span reads IR. Catalysis depends on charge relay system residues histidine 163 and glutamate 165.

It belongs to the glutaminase PdxT/SNO family. In terms of assembly, in the presence of PdxS, forms a dodecamer of heterodimers. Only shows activity in the heterodimer.

The enzyme catalyses aldehydo-D-ribose 5-phosphate + D-glyceraldehyde 3-phosphate + L-glutamine = pyridoxal 5'-phosphate + L-glutamate + phosphate + 3 H2O + H(+). It catalyses the reaction L-glutamine + H2O = L-glutamate + NH4(+). The protein operates within cofactor biosynthesis; pyridoxal 5'-phosphate biosynthesis. Functionally, catalyzes the hydrolysis of glutamine to glutamate and ammonia as part of the biosynthesis of pyridoxal 5'-phosphate. The resulting ammonia molecule is channeled to the active site of PdxS. In Francisella tularensis subsp. holarctica (strain FTNF002-00 / FTA), this protein is Pyridoxal 5'-phosphate synthase subunit PdxT.